The following is a 2140-amino-acid chain: Dedicator of cytokinesis protein 7 (2140 aa).

Ser-30, Ser-180, and Ser-182 each carry phosphoserine. The interval 138-183 (FNPNTLDKQKERQKGLPKQVFESDEAPDGNSYQDDQDDLKRRSMSI) is disordered. Residues 365 to 395 (FKEADATKNKEKLEKLKSQADQFCQRLGKYR) are a coiled coil. Lys-381 bears the N6-methyllysine mark. Thr-450 is modified (phosphothreonine). A Phosphoserine modification is found at Ser-452. Residues 561–727 (RNLLYIYPQS…GVFNVEVVAV (167 aa)) enclose the C2 DOCK-type domain. Phosphoserine is present on residues Ser-862, Ser-864, Ser-882, Ser-888, Ser-896, Ser-900, and Ser-905. Residues 888–901 (SLNLNRSRSLSNSN) show a composition bias toward low complexity. Residues 888-971 (SLNLNRSRSL…MSSHTETSSF (84 aa)) form a disordered region. Thr-907 and Thr-909 each carry phosphothreonine. 14 positions are modified to phosphoserine: Ser-910, Ser-929, Ser-964, Ser-1383, Lys-1390, Ala-1394, Glu-1398, Tyr-1421, Ser-1425, Arg-1429, Ser-1430, Ser-1432, Ser-1434, and Ser-1438. Positions 943 to 971 (SNPSPSAESTQAMDRSCNRMSSHTETSSF) are enriched in polar residues. Positions 1678-2114 (KGYQTSPDLR…LQPLINRKIP (437 aa)) constitute a DOCKER domain. The residue at position 1962 (Lys-1962) is an N6-acetyllysine. A coiled-coil region spans residues 2086–2112 (DQKEYQRELERNYHRLKEALQPLINRK). Ser-2129 is subject to Phosphoserine.

Belongs to the DOCK family. In terms of assembly, component of the DOCK7-induced septin displacement/DISP complex, at least composed of DOCK7, LRCH3 and MYO6. Interacts with TSC1. Interacts with nucleotide-free RAC1 and RAC3. Interacts with TACC3 and CRY1. Interacts with NOD2. In terms of tissue distribution, widely expressed.

The protein localises to the cell projection. The protein resides in the axon. Functionally, functions as a guanine nucleotide exchange factor (GEF), which activates Rac1 and Rac3 Rho small GTPases by exchanging bound GDP for free GTP. Does not have a GEF activity for CDC42. Required for STMN1 'Ser-15' phosphorylation during axon formation and consequently for neuronal polarization. As part of the DISP complex, may regulate the association of septins with actin and thereby regulate the actin cytoskeleton. Has a role in pigmentation. Involved in the regulation of cortical neurogenesis through the control of radial glial cells (RGCs) proliferation versus differentiation; negatively regulates the basal-to-apical interkinetic nuclear migration of RGCs by antagonizing the microtubule growth-promoting function of TACC3. This chain is Dedicator of cytokinesis protein 7 (DOCK7), found in Homo sapiens (Human).